A 362-amino-acid chain; its full sequence is Fructose-bisphosphate aldolase (362 aa).

D-glyceraldehyde 3-phosphate is bound at residue Ser63. The active-site Proton donor is Asp112. Residues His113, Asp147, Glu177, and His229 each contribute to the Zn(2+) site. Gly230 lines the dihydroxyacetone phosphate pocket. His268 lines the Zn(2+) pocket. Dihydroxyacetone phosphate is bound by residues 269–271 and 290–293; these read GGS and NVDT.

Belongs to the class II fructose-bisphosphate aldolase family. Homodimer. The cofactor is Zn(2+).

It catalyses the reaction beta-D-fructose 1,6-bisphosphate = D-glyceraldehyde 3-phosphate + dihydroxyacetone phosphate. The protein operates within carbohydrate degradation; glycolysis; D-glyceraldehyde 3-phosphate and glycerone phosphate from D-glucose: step 4/4. Functionally, catalyzes the aldol condensation of dihydroxyacetone phosphate (DHAP or glycerone-phosphate) with glyceraldehyde 3-phosphate (G3P) to form fructose 1,6-bisphosphate (FBP) in gluconeogenesis and the reverse reaction in glycolysis. The polypeptide is Fructose-bisphosphate aldolase (fba) (Neurospora crassa (strain ATCC 24698 / 74-OR23-1A / CBS 708.71 / DSM 1257 / FGSC 987)).